The primary structure comprises 95 residues: Defensin-like protein 247 (95 aa).

A signal peptide spans 1–24 (MKFAAIFLVTCVFFSLFSSNLSQG). 4 disulfides stabilise this stretch: cysteine 37/cysteine 94, cysteine 48/cysteine 77, cysteine 56/cysteine 87, and cysteine 75/cysteine 89.

Belongs to the DEFL family.

It localises to the secreted. The protein is Defensin-like protein 247 (SCRL6) of Arabidopsis thaliana (Mouse-ear cress).